Here is a 612-residue protein sequence, read N- to C-terminus: Membrane protein insertase YidC (612 aa).

A run of 7 helical transmembrane segments spans residues 4-24 (NTII…YLNH), 329-349 (LVPL…IPIF), 358-378 (VNLG…LFPL), 434-454 (ILLQ…AIGL), 484-504 (FLGN…ILNT), 524-544 (LTMY…PAGL), and 546-566 (YYYL…RGLV).

It belongs to the OXA1/ALB3/YidC family. Type 1 subfamily. Interacts with the Sec translocase complex via SecD. Specifically interacts with transmembrane segments of nascent integral membrane proteins during membrane integration.

Its subcellular location is the cell inner membrane. In terms of biological role, required for the insertion and/or proper folding and/or complex formation of integral membrane proteins into the membrane. Involved in integration of membrane proteins that insert both dependently and independently of the Sec translocase complex, as well as at least some lipoproteins. Aids folding of multispanning membrane proteins. The protein is Membrane protein insertase YidC of Azobacteroides pseudotrichonymphae genomovar. CFP2.